The chain runs to 61 residues: Lens epithelial cell protein LEP503 (61 aa).

Restricted to lens epithelial cells.

Functionally, may play a role in lens epithelial cell differentiation. The chain is Lens epithelial cell protein LEP503 (LENEP) from Homo sapiens (Human).